A 122-amino-acid chain; its full sequence is Defensin-like protein 181 (122 aa).

The signal sequence occupies residues 1–26 (MERIPSLASLVSLLIIFATVVNQTRA). 8 cysteine pairs are disulfide-bonded: C29/C70, C36/C55, C39/C64, C43/C66, C76/C122, C87/C107, C92/C116, and C96/C118.

Belongs to the DEFL family.

It is found in the secreted. Functionally, confers broad-spectrum resistance to pathogens. This Arabidopsis thaliana (Mouse-ear cress) protein is Defensin-like protein 181 (PDF3.1).